Reading from the N-terminus, the 111-residue chain is MASLLYLILFLLFVCISYYFTYYPTNKLQAAVMETDRENAIIRQRNDEIPTRTLDTAIFTDASTVASAQIHLYYNSNIGKIIMSLNGKKHTFNLYDDNDIRTLLPILLLSK.

Residues M1 to T21 form a helical; Signal-anchor membrane-spanning segment. At Y22–K111 the chain is on the virion surface side.

This sequence belongs to the orthopoxvirus OPG086 family. In terms of assembly, interacts with OPG099/L5. Component of the entry fusion complex (EFC) composed of OPG053, OPG076, OPG086, OPG094, OPG095, OPG099, OPG107, OPG143, OPG104, OPG147 and OPG155. Except for OPG095 and OPG053, each of the EFC proteins is required for assembly or stability of the complex. Unglycosylated because produced in viral factories instead of the classic ER -Golgi route.

Its subcellular location is the virion membrane. Functionally, component of the entry fusion complex (EFC), which consists of 11 proteins. During cell infection, this complex mediates entry of the virion core into the host cytoplasm by a two-step mechanism consisting of lipid mixing of the viral and cellular membranes and subsequent pore formation. This Vaccinia virus (strain Copenhagen) (VACV) protein is Entry-fusion complex protein OPG086 (OPG086).